Reading from the N-terminus, the 265-residue chain is PBSX phage terminase small subunit (265 aa).

The interval 241–265 (KQKAEKTDDSQEPIEIMIKRKERKS) is disordered.

This sequence to B.subtilis YqaS and B.subtilis phage SPP1 terminase small subunit. In terms of assembly, dimer of a small and a large subunit.

Functionally, functions as a terminase. This is PBSX phage terminase small subunit (xtmA) from Bacillus subtilis (strain 168).